Reading from the N-terminus, the 583-residue chain is Aspartate--tRNA ligase (583 aa).

Glutamate 174 provides a ligand contact to L-aspartate. The segment at 198–201 (QITK) is aspartate. Arginine 220 is an L-aspartate binding site. Residues 220–222 (RDE) and glutamine 229 each bind ATP. An L-aspartate-binding site is contributed by histidine 443. Residue glutamate 477 participates in ATP binding. Arginine 484 serves as a coordination point for L-aspartate. 529 to 532 (GLDR) contacts ATP.

The protein belongs to the class-II aminoacyl-tRNA synthetase family. Type 1 subfamily. Homodimer.

It localises to the cytoplasm. The catalysed reaction is tRNA(Asp) + L-aspartate + ATP = L-aspartyl-tRNA(Asp) + AMP + diphosphate. Catalyzes the attachment of L-aspartate to tRNA(Asp) in a two-step reaction: L-aspartate is first activated by ATP to form Asp-AMP and then transferred to the acceptor end of tRNA(Asp). The chain is Aspartate--tRNA ligase from Streptococcus agalactiae serotype V (strain ATCC BAA-611 / 2603 V/R).